Consider the following 444-residue polypeptide: MFS-type transporter dbaD (444 aa).

The segment covering 1–13 has biased composition (polar residues); that stretch reads MTEQPPQNHSVDL. Residues 1 to 57 form a disordered region; that stretch reads MTEQPPQNHSVDLNQNEDNNENDYRSSSATDAERPCEPKIEESTAKPPTGPPAPPPP. N-linked (GlcNAc...) asparagine glycosylation is present at N8. Basic and acidic residues predominate over residues 31 to 44; sequence DAERPCEPKIEEST. The span at 48-57 shows a compositional bias: pro residues; the sequence is PTGPPAPPPP. 11 helical membrane passes run 62 to 82, 107 to 127, 134 to 154, 159 to 179, 192 to 212, 223 to 243, 267 to 287, 301 to 323, 330 to 350, 356 to 376, and 394 to 414; these read LVAWLHVIGGFMLFFNTWGIM, WIGSIQATMLLLVGFFTGSIY, ALLVVGSFCIVFGHMMLSLCK, VLLAQGFCVGIGAGCLFVPCV, TALGLAVSGSSMGGVIYPIVL, WSVRVIGFIALGTLLVPIAVM, MAFTLASLLAFMGLFALLFYI, MAFYIVPILNAASCFGRTIPNAM, FNLIAPCCLAVGVLILCLLAV, LIVIALLSGFFGGALIGLPPL, and MGFGMVGLGVLAGGPAGGAIL. An N-linked (GlcNAc...) asparagine glycan is attached at N421. Residues 424–444 traverse the membrane as a helical segment; sequence GLWVYGGVTSLVAGFIICIAV.

This sequence belongs to the major facilitator superfamily. Monocarboxylate porter (TC 2.A.1.13) family.

It localises to the cell membrane. Its function is as follows. MFS-type transporter; part of the gene cluster that mediates the biosynthesis of the antibiotic 2,4- dihydroxy-3-methyl-6-(2-oxopropyl)benzaldehyde (DHMBA) and its derivatives. Is probably involved in the transport of the metabolites to the environment. This is MFS-type transporter dbaD from Emericella nidulans (strain FGSC A4 / ATCC 38163 / CBS 112.46 / NRRL 194 / M139) (Aspergillus nidulans).